Here is a 315-residue protein sequence, read N- to C-terminus: Acetyl-coenzyme A carboxylase carboxyl transferase subunit alpha (315 aa).

A CoA carboxyltransferase C-terminal domain is found at Leu40–Met293.

The protein belongs to the AccA family. Acetyl-CoA carboxylase is a heterohexamer composed of biotin carboxyl carrier protein (AccB), biotin carboxylase (AccC) and two subunits each of ACCase subunit alpha (AccA) and ACCase subunit beta (AccD).

The protein resides in the cytoplasm. The catalysed reaction is N(6)-carboxybiotinyl-L-lysyl-[protein] + acetyl-CoA = N(6)-biotinyl-L-lysyl-[protein] + malonyl-CoA. It functions in the pathway lipid metabolism; malonyl-CoA biosynthesis; malonyl-CoA from acetyl-CoA: step 1/1. Functionally, component of the acetyl coenzyme A carboxylase (ACC) complex. First, biotin carboxylase catalyzes the carboxylation of biotin on its carrier protein (BCCP) and then the CO(2) group is transferred by the carboxyltransferase to acetyl-CoA to form malonyl-CoA. In Pseudomonas syringae pv. tomato (strain ATCC BAA-871 / DC3000), this protein is Acetyl-coenzyme A carboxylase carboxyl transferase subunit alpha.